An 868-amino-acid chain; its full sequence is Protein NIP100 (868 aa).

In terms of domain architecture, CAP-Gly spans 34 to 84 (GETQFAKGIWYGIELDKPLGKNDGSANGIRYFDIDLKKANSNGGYYGLFCK). Coiled coils occupy residues 101-175 (LNGN…HLDN), 207-375 (LDQT…QEEL), and 645-776 (SLLS…QIKE).

Component of the dynactin complex composed of at least ARP1, JNM1, NIP100 and ARP10. Dynactin comprises a short rod of the ARP1 filament attached to ARP10 at its pointed-end and probably associated with the capping protein at its barbed-end. The rod is implicated in dynein cargo binding. A sidearm formed by NIP100 projects from the ARP1 filament and is implicated in motor binding.

It localises to the cytoplasm. The protein localises to the cytoskeleton. Its subcellular location is the spindle pole. Its function is as follows. Motor-binding component of the dynactin complex which assists cytoplasmic dynein by increasing its processivity and by regulation of its cargo binding. The dynactin complex is required for the spindle translocation late in anaphase and is involved in a cell wall synthesis checkpoint. This is Protein NIP100 (NIP100) from Saccharomyces cerevisiae (strain ATCC 204508 / S288c) (Baker's yeast).